A 397-amino-acid chain; its full sequence is Alanine racemase, biosynthetic (397 aa).

The active-site Proton acceptor; specific for D-alanine is Lys-42. Residue Lys-42 is modified to N6-(pyridoxal phosphate)lysine. Arg-136 is a substrate binding site. Tyr-257 (proton acceptor; specific for L-alanine) is an active-site residue. Position 305 (Met-305) interacts with substrate. Residues 373-397 (ANRPTEAMSNPSRAKSRPMDKQALI) are disordered.

It belongs to the alanine racemase family. The cofactor is pyridoxal 5'-phosphate.

It catalyses the reaction L-alanine = D-alanine. Its pathway is amino-acid biosynthesis; D-alanine biosynthesis; D-alanine from L-alanine: step 1/1. It functions in the pathway cell wall biogenesis; peptidoglycan biosynthesis. In terms of biological role, catalyzes the interconversion of L-alanine and D-alanine. Provides the D-alanine required for cell wall biosynthesis. The polypeptide is Alanine racemase, biosynthetic (alr) (Mesorhizobium japonicum (strain LMG 29417 / CECT 9101 / MAFF 303099) (Mesorhizobium loti (strain MAFF 303099))).